Consider the following 810-residue polypeptide: Plasminogen (810 aa).

The first 19 residues, 1 to 19, serve as a signal peptide directing secretion; it reads MEHKEVVLLLLLFLKSGQG. The 79-residue stretch at 20–98 folds into the PAN domain; that stretch reads EPLDDYVNTQ…RDVVLFEKKV (79 aa). Cystine bridges form between Cys-49–Cys-73, Cys-53–Cys-61, Cys-103–Cys-181, Cys-124–Cys-164, Cys-152–Cys-176, Cys-185–Cys-262, Cys-188–Cys-316, Cys-206–Cys-245, Cys-234–Cys-257, Cys-275–Cys-352, Cys-296–Cys-335, and Cys-324–Cys-347. Kringle domains are found at residues 103–181 and 184–262; these read CKTG…ILEC and ECMH…IPRC. Positions 126–145 are disordered; that stretch reads KWSSTSPHRPRFSPATHPSE. Residues Arg-136, Asp-158, and Arg-172 each contribute to the L-lysine site. O-linked (GalNAc...) serine glycosylation is present at Ser-268. Positions 275–352 constitute a Kringle 3 domain; that stretch reads CLKGTGENYR…RWEYCKIPSC (78 aa). A glycan (N-linked (GlcNAc...) asparagine) is linked at Asn-308. Residue Thr-365 is glycosylated (O-linked (GalNAc...) threonine). 9 disulfide bridges follow: Cys-377–Cys-454, Cys-398–Cys-437, Cys-426–Cys-449, Cys-481–Cys-560, Cys-502–Cys-543, Cys-531–Cys-555, Cys-567–Cys-685, Cys-577–Cys-585, and Cys-607–Cys-623. Kringle domains follow at residues 377–454 and 481–560; these read CYHG…LKKC and CMFG…VPQC. The interval 396 to 416 is disordered; the sequence is KKCQSWSSMTPHRHQKTPENY. L-lysine-binding residues include Asp-432 and Arg-445. Residues 581–808 form the Peptidase S1 domain; it reads VVGGCVAHPH…FVTWIEGVMR (228 aa). Ser-597 carries the post-translational modification Phosphoserine. Residues His-622 and Asp-665 each act as charge relay system in the active site. Position 688 is a phosphoserine (Ser-688). Cystine bridges form between Cys-699/Cys-766, Cys-729/Cys-745, and Cys-756/Cys-784. Ser-760 serves as the catalytic Charge relay system.

Belongs to the peptidase S1 family. Plasminogen subfamily. As to quaternary structure, interacts (both mature PLG and the angiostatin peptide) with CSPG4 and AMOT. Interacts (via the Kringle domains) with HRG; the interaction tethers PLG to the cell surface and enhances its activation. Interacts (via Kringle 4 domain) with ADA; the interaction stimulates PLG activation when in complex with DPP4. Angiostatin: Interacts with ATP5F1A; the interaction inhibits most of the angiogenic effects of angiostatin. Interacts (plasmin) with iripin-8, a serine protease inhibitor from Ixodes ricinus saliva. Interacts (plasmin) with iripin-1, a serine protease inhibitor from Ixodes ricinus saliva. Interacts (plasmin) with Kazal-type trypsin inhibitor, a serine protease inhibitor from Aedes aegypti. In terms of assembly, (Microbial infection) Interacts with C.albicans GPD2; the interaction is direct and provides active plasmin on the surface of fungal cells. (Microbial infection) Interacts with Staphylococcus aureus protein FnbB; this interaction provides active plasmin on the surface of bacterial cells. As to quaternary structure, (Microbial infection) Interacts with P.falciparum (strain NF54) enolase ENO (via DKSLVK motif); the interaction occurs at the ookinete cell surface and is required for ookinete invasion of the mosquito midgut. In terms of assembly, (Microbial infection) Interacts with B.burgdorferi OspC. Post-translationally, N-linked glycan contains N-acetyllactosamine and sialic acid. O-linked glycans consist of Gal-GalNAc disaccharide modified with up to 2 sialic acid residues (microheterogeneity). In terms of processing, in the presence of the inhibitor, the activation involves only cleavage after Arg-580, yielding two chains held together by two disulfide bonds. In the absence of the inhibitor, the activation involves additionally the removal of the activation peptide. (Microbial infection) The Y.pestis Pla protein cleaves between Arg-580 and Val-581, generating plasmin which facilitates bacterial migration and infection. Present in plasma and many other extracellular fluids. It is synthesized in the liver.

It is found in the secreted. The enzyme catalyses Preferential cleavage: Lys-|-Xaa &gt; Arg-|-Xaa, higher selectivity than trypsin. Converts fibrin into soluble products.. Its activity is regulated as follows. Converted into plasmin by plasminogen activators, both plasminogen and its activator being bound to fibrin. Activated with catalytic amounts of streptokinase. Plasmin activity inhibited by SERPINE2. In terms of biological role, plasmin dissolves the fibrin of blood clots and acts as a proteolytic factor in a variety of other processes including embryonic development, tissue remodeling, tumor invasion, and inflammation. In ovulation, weakens the walls of the Graafian follicle. It activates the urokinase-type plasminogen activator, collagenases and several complement zymogens, such as C1, C4 and C5. Cleavage of fibronectin and laminin leads to cell detachment and apoptosis. Also cleaves fibrin, thrombospondin and von Willebrand factor. Its role in tissue remodeling and tumor invasion may be modulated by CSPG4. Binds to cells. Angiostatin is an angiogenesis inhibitor that blocks neovascularization and growth of experimental primary and metastatic tumors in vivo. Functionally, (Microbial infection) ENO/enoloase from parasite P.falciparum (strain NF54) interacts with PLG present in the mosquito blood meal to promote the invasion of the mosquito midgut by the parasite ookinete. The catalytic active form, plasmin, is essential for the invasion of the mosquito midgut. Its function is as follows. (Microbial infection) Binds to OspC on the surface of B.burgdorferi cells, possibly conferring an extracellular protease activity on the bacteria that allows it to traverse host tissue. In terms of biological role, (Microbial infection) Interacts with dengue virus type 2 particles. Enhances dengue virus type 2 infection in Aedes aegypti mosquito midgut by increasing midgut internalization, resulting in higher infection rates and viral dissemination in mosquitoes. The protein is Plasminogen (PLG) of Homo sapiens (Human).